A 138-amino-acid polypeptide reads, in one-letter code: Secreted RxLR effector protein 91 (138 aa).

The N-terminal stretch at M1 to C18 is a signal peptide. The short motif at R34–R37 is the RxLR element. N93 carries an N-linked (GlcNAc...) asparagine glycan.

Belongs to the RxLR effector family.

It is found in the secreted. The protein resides in the host nucleus. In terms of biological role, secreted effector that completely suppresses the host cell death induced by cell death-inducing proteins. In Plasmopara viticola (Downy mildew of grapevine), this protein is Secreted RxLR effector protein 91.